The following is a 269-amino-acid chain: Cytochrome c oxidase subunit 3 (269 aa).

The next 7 helical transmembrane spans lie at 7–29 (GYLQ…TSFS), 51–71 (IILS…DIIA), 90–110 (GFLL…WAYL), 127–147 (VGID…ILLA), 167–187 (TLYG…FQFL), 205–225 (FYSL…MLVI), and 247–267 (ILYL…VYWW).

This sequence belongs to the cytochrome c oxidase subunit 3 family. As to quaternary structure, component of the cytochrome c oxidase (complex IV, CIV), a multisubunit enzyme composed of a catalytic core of 3 subunits and several supernumerary subunits. The complex exists as a monomer or a dimer and forms supercomplexes (SCs) in the inner mitochondrial membrane with ubiquinol-cytochrome c oxidoreductase (cytochrome b-c1 complex, complex III, CIII).

Its subcellular location is the mitochondrion inner membrane. The catalysed reaction is 4 Fe(II)-[cytochrome c] + O2 + 8 H(+)(in) = 4 Fe(III)-[cytochrome c] + 2 H2O + 4 H(+)(out). Component of the cytochrome c oxidase, the last enzyme in the mitochondrial electron transport chain which drives oxidative phosphorylation. The respiratory chain contains 3 multisubunit complexes succinate dehydrogenase (complex II, CII), ubiquinol-cytochrome c oxidoreductase (cytochrome b-c1 complex, complex III, CIII) and cytochrome c oxidase (complex IV, CIV), that cooperate to transfer electrons derived from NADH and succinate to molecular oxygen, creating an electrochemical gradient over the inner membrane that drives transmembrane transport and the ATP synthase. Cytochrome c oxidase is the component of the respiratory chain that catalyzes the reduction of oxygen to water. Electrons originating from reduced cytochrome c in the intermembrane space (IMS) are transferred via the dinuclear copper A center (CU(A)) of subunit 2 and heme A of subunit 1 to the active site in subunit 1, a binuclear center (BNC) formed by heme A3 and copper B (CU(B)). The BNC reduces molecular oxygen to 2 water molecules using 4 electrons from cytochrome c in the IMS and 4 protons from the mitochondrial matrix. The chain is Cytochrome c oxidase subunit 3 (COX3) from Candida parapsilosis (Yeast).